A 119-amino-acid chain; its full sequence is Large ribosomal subunit protein uL14m (119 aa).

The protein belongs to the universal ribosomal protein uL14 family.

It localises to the mitochondrion. In Tetrahymena pyriformis, this protein is Large ribosomal subunit protein uL14m.